A 481-amino-acid chain; its full sequence is uncharacterized protein (481 aa).

Transmembrane regions (helical) follow at residues 32–52 (LSWLFMFICAGLGSSTLYWGV), 82–102 (FFHWGISAWATYTLASLIMAY), 137–157 (MFLIATVGALTISLVVTAATF), 173–193 (VQAFVILLSGGIFCLSSWIGI), 204–224 (VGWGAFLLPLLVLIVGPTEFI), 258–278 (WTVFYWLWWISYTPGVAMFVT), 289–309 (VIWGLILGSTVGCWFFFGVME), 348–368 (LFLAAYLGVMIIFLASHMDAV), 392–412 (LFWCVVITLIPLSILFTGASL), and 418–438 (TVVLTALPFLVILLVKVGGFI).

This sequence belongs to the BCCT transporter (TC 2.A.15) family.

The protein resides in the cell inner membrane. Its function is as follows. Probable transporter whose substrate is unknown. Is not involved in aerobic D-malate transport. This is an uncharacterized protein from Escherichia coli (strain K12).